The chain runs to 260 residues: Small ribosomal subunit protein uS2 (260 aa).

The protein belongs to the universal ribosomal protein uS2 family.

This is Small ribosomal subunit protein uS2 from Staphylococcus carnosus (strain TM300).